Here is a 1159-residue protein sequence, read N- to C-terminus: MCGPAMFPAGPRWPRVRVLQVLWALLAVLLASRRLWAIKDFEECTWQVVLNEFKRVGENGASDRFFEQELVDTVGNLFHMLVDSPIDPREKYLGFPYYLKINYSCEEKHSEDLVRMGHLTGLKPVVLVTFQSPVNFYRWKIEQLQIQMEAAPFRSKEPCIAEEVCSMSWYTPMPIKNGSVVTRVDVSSNGLGTFIPDKRFQVNINGFLKRNQDNDIQFTVGDELFNLMPQYFVGISSRPLWHTVDQSPVLILGGIPNEKYVLMTDTSFKDFSLVELSIDSCWVGSFYCPQSGFTATIYDTVATESTLFIRQNQLVYYFTGTYTTLYERNRGSGSWVRVLASECIKKLCPVYFHSNGSEYIMALTTGKHEGFVHFGTIRDGQVSFEMLPREWSVCEQIGVTTCSIIWSDYIAGEYTLLLLVESEYENASKRFQVVSYNTANDDLELLYHIPEFIPEARGLEFLMILGTESYTNTVMTPKGISCNPYNHLIFIWGNFLLQSSNKENFIYLADFPKELSIKYMTRSFRGAVAIVTETEEIWYLLEGTYRVYRLFPSKGWKVHISLQLMQQSSLYASNETMLTLFYEGSKLYQLVYLMNNQKGQLVKRLMPVEQLLMYQQHTSHYDLDRKGGYLMLSFTNFCPFSVMRLRNLPGPQRYTRQERYRARPPHVLERSGFHNENSLAIYQGLIYYLLWLHSVYDKPYADPVHDPTWRWWENNKQDQDYYFFLASNWRSAGGVFIEMDSYEKIYNLKSAYELPERIFLDKGTEYSFAIFLSAQSRSFRTMADLGTVFELHSHVDVGVVLADPGCIEASVKQEVLINRNAVLFSITLKDKKVCYDQGISGHHLMKSSMTVNVVGSSGLCFQETHAGARMQGNLMVPVFIGCPPGKRLAFDITYTLEYSRLKNKHYFDCVQVDPEMPCFLFRDIFYPFFLIQDLVTGDSGSFQGSYVLLVVGGGPTLDTLKDYNKDEIYRFNSPLDKTHSLIWTTRTKRTTKDSAFHIMSHESPGIEWLCLENAPCYDNVPQGIFAPEFFFKVLVSNRGVDTSTYCNYQLTFLLHIHGLPLSPKRALFILMVSLSVFVGLVIFYIAFCLLWPLVVKGCTMIRWKINDIIASESYYTYASISGMSSMQSLRRSRMGSMFSSRMTEDKAEPKEAVERQLMT.

Positions 1-35 are cleaved as a signal peptide; the sequence is MCGPAMFPAGPRWPRVRVLQVLWALLAVLLASRRL. The Extracellular portion of the chain corresponds to 36-1065; the sequence is WAIKDFEECT…IHGLPLSPKR (1030 aa). 2 cysteine pairs are disulfide-bonded: C44-C105 and C159-C165. N102 carries an N-linked (GlcNAc...) asparagine glycan. Residue N177 is glycosylated (N-linked (GlcNAc...) asparagine). An intrachain disulfide couples C288 to C343. N-linked (GlcNAc...) asparagine glycosylation is present at N355. A disulfide bridge connects residues C394 and C402. N-linked (GlcNAc...) asparagine glycans are attached at residues N426 and N574. 5 disulfides stabilise this stretch: C638–C860, C806–C834, C882–C1046, C909–C918, and C1010–C1016. Residues 1066–1087 traverse the membrane as a helical segment; it reads ALFILMVSLSVFVGLVIFYIAF. Residues 1088 to 1159 are Cytoplasmic-facing; the sequence is CLLWPLVVKG…KEAVERQLMT (72 aa). The segment at 1138–1159 is disordered; sequence FSSRMTEDKAEPKEAVERQLMT. Over residues 1142–1159 the composition is skewed to basic and acidic residues; that stretch reads MTEDKAEPKEAVERQLMT.

Belongs to the CATSPERG family. Component of the CatSper complex or CatSpermasome composed of the core pore-forming members CATSPER1, CATSPER2, CATSPER3 and CATSPER4 as well as auxiliary members CATSPERB, CATSPERG, CATSPERD, CATSPERE, CATSPERZ, SCLO6C1, TMEM249, TMEM262 and EFCAB9. HSPA1 may be an additional auxiliary complex member. The core complex members CATSPER1, CATSPER2, CATSPER3 and CATSPER4 form a heterotetrameric channel. The auxiliary CATSPERB, CATSPERG, CATSPERD and CATSPERE subunits form a pavilion-like structure over the pore which stabilizes the complex through interactions with CATSPER4, CATSPER3, CATSPER1 and CATSPER2 respectively. TMEM262/CATSPERH interacts with CATSPERB, further stabilizing the complex. C2CD6/CATSPERT interacts at least with CATSPERD and is required for targeting the CatSper complex in the flagellar membrane.

The protein localises to the cell projection. Its subcellular location is the cilium. The protein resides in the flagellum membrane. Its function is as follows. Auxiliary component of the CatSper complex, a complex involved in sperm cell hyperactivation. Sperm cell hyperactivation is needed for sperm motility which is essential late in the preparation of sperm for fertilization. The protein is Cation channel sperm-associated auxiliary subunit gamma of Macaca fascicularis (Crab-eating macaque).